A 286-amino-acid polypeptide reads, in one-letter code: Bifunctional protein FolD (286 aa).

NADP(+)-binding positions include G166–S168 and S191.

Belongs to the tetrahydrofolate dehydrogenase/cyclohydrolase family. In terms of assembly, homodimer.

It carries out the reaction (6R)-5,10-methylene-5,6,7,8-tetrahydrofolate + NADP(+) = (6R)-5,10-methenyltetrahydrofolate + NADPH. It catalyses the reaction (6R)-5,10-methenyltetrahydrofolate + H2O = (6R)-10-formyltetrahydrofolate + H(+). Its pathway is one-carbon metabolism; tetrahydrofolate interconversion. Catalyzes the oxidation of 5,10-methylenetetrahydrofolate to 5,10-methenyltetrahydrofolate and then the hydrolysis of 5,10-methenyltetrahydrofolate to 10-formyltetrahydrofolate. In Lactiplantibacillus plantarum (strain ATCC BAA-793 / NCIMB 8826 / WCFS1) (Lactobacillus plantarum), this protein is Bifunctional protein FolD.